Consider the following 394-residue polypeptide: Short-chain dehydrogenase/reductase family 42E member 1 (394 aa).

Tyr-153 acts as the Proton acceptor in catalysis. Lys-157 is an NAD(+) binding site. A run of 2 helical transmembrane segments spans residues 283-303 (LPLTLIYCLAFLVEMTHFIVG) and 367-387 (FMLWDGILILLLALSVLTWIL).

Belongs to the 3-beta-HSD family.

Its subcellular location is the membrane. This is Short-chain dehydrogenase/reductase family 42E member 1 (Sdr42e1) from Mus musculus (Mouse).